Here is a 120-residue protein sequence, read N- to C-terminus: uncharacterized protein (120 aa).

This is an uncharacterized protein from Mycoplasma pneumoniae (strain ATCC 29342 / M129 / Subtype 1) (Mycoplasmoides pneumoniae).